A 224-amino-acid chain; its full sequence is Fibrillarin-like rRNA/tRNA 2'-O-methyltransferase (224 aa).

S-adenosyl-L-methionine contacts are provided by residues 82–83, 100–101, 125–126, and 145–148; these read TT, EF, DA, and DVAQ.

The protein belongs to the methyltransferase superfamily. Fibrillarin family. As to quaternary structure, interacts with nop5. Component of box C/D small ribonucleoprotein (sRNP) particles that contain rpl7ae, FlpA and nop5, plus a guide RNA.

In terms of biological role, involved in pre-rRNA and tRNA processing. Utilizes the methyl donor S-adenosyl-L-methionine to catalyze the site-specific 2'-hydroxyl methylation of ribose moieties in rRNA and tRNA. Site specificity is provided by a guide RNA that base pairs with the substrate. Methylation occurs at a characteristic distance from the sequence involved in base pairing with the guide RNA. This is Fibrillarin-like rRNA/tRNA 2'-O-methyltransferase from Methanothermobacter thermautotrophicus (strain ATCC 29096 / DSM 1053 / JCM 10044 / NBRC 100330 / Delta H) (Methanobacterium thermoautotrophicum).